The following is a 571-amino-acid chain: Glycine--tRNA ligase (571 aa).

Positions 99 and 165 each coordinate substrate. ATP is bound by residues 197 to 199 (RNE), 207 to 212 (IRLREF), 324 to 325 (EC), and 443 to 446 (GIDR). A substrate-binding site is contributed by 212 to 216 (FTQAE). 439–443 (EPSFG) is a binding site for substrate.

This sequence belongs to the class-II aminoacyl-tRNA synthetase family.

The protein resides in the cytoplasm. The enzyme catalyses tRNA(Gly) + glycine + ATP = glycyl-tRNA(Gly) + AMP + diphosphate. Functionally, catalyzes the attachment of glycine to tRNA(Gly). The chain is Glycine--tRNA ligase from Pyrococcus abyssi (strain GE5 / Orsay).